A 151-amino-acid polypeptide reads, in one-letter code: Major latex allergen Hev b 5 (151 aa).

A disordered region spans residues 1–151; that stretch reads MASVEVESAA…TEVPVEKTEE (151 aa). Residue Ala2 is modified to N-acetylalanine. The segment covering 17-31 has biased composition (basic and acidic residues); sequence ETPEVTKAEETKTEE. 2 stretches are compositionally biased toward low complexity: residues 36–45 and 53–64; these read PASEQETADA and TAAPAEPEAPAP. Basic and acidic residues-rich tracts occupy residues 65–80, 103–113, and 122–133; these read ETEKAEEVEKIEKTEE, EEPKHETKETE, and EGEKPAEEEKPI. The span at 134–144 shows a compositional bias: low complexity; sequence TEAAETATTEV.

It to kiwi fruit protein PKIWI501. Post-translationally, the N-terminus is blocked.

The polypeptide is Major latex allergen Hev b 5 (Hevea brasiliensis (Para rubber tree)).